The chain runs to 131 residues: Small ribosomal subunit protein uS8 (131 aa).

The protein belongs to the universal ribosomal protein uS8 family. Part of the 30S ribosomal subunit. Contacts proteins S5 and S12.

In terms of biological role, one of the primary rRNA binding proteins, it binds directly to 16S rRNA central domain where it helps coordinate assembly of the platform of the 30S subunit. The polypeptide is Small ribosomal subunit protein uS8 (Acidovorax sp. (strain JS42)).